A 172-amino-acid chain; its full sequence is S-ribosylhomocysteine lyase (172 aa).

Fe cation contacts are provided by His54, His58, and Cys128.

The protein belongs to the LuxS family. As to quaternary structure, homodimer. Fe cation is required as a cofactor.

The catalysed reaction is S-(5-deoxy-D-ribos-5-yl)-L-homocysteine = (S)-4,5-dihydroxypentane-2,3-dione + L-homocysteine. Involved in the synthesis of autoinducer 2 (AI-2) which is secreted by bacteria and is used to communicate both the cell density and the metabolic potential of the environment. The regulation of gene expression in response to changes in cell density is called quorum sensing. Catalyzes the transformation of S-ribosylhomocysteine (RHC) to homocysteine (HC) and 4,5-dihydroxy-2,3-pentadione (DPD). This chain is S-ribosylhomocysteine lyase, found in Vibrio vulnificus (strain CMCP6).